We begin with the raw amino-acid sequence, 308 residues long: Ribosomal RNA small subunit methyltransferase H (308 aa).

S-adenosyl-L-methionine contacts are provided by residues 36–38 (GGH), D55, F86, D103, and Q110.

The protein belongs to the methyltransferase superfamily. RsmH family.

Its subcellular location is the cytoplasm. It catalyses the reaction cytidine(1402) in 16S rRNA + S-adenosyl-L-methionine = N(4)-methylcytidine(1402) in 16S rRNA + S-adenosyl-L-homocysteine + H(+). Specifically methylates the N4 position of cytidine in position 1402 (C1402) of 16S rRNA. The protein is Ribosomal RNA small subunit methyltransferase H of Helicobacter pylori (strain Shi470).